The sequence spans 400 residues: MRDVFICDAIRTPIGRFGGALAGVRADDLAAVPLKALIEPNPAVQWDQVDEVFFGCANQAGEDNRNVARMALLLAGLPESIPGVTLNRLCASGMDAIGTAFRAIASGEMELAIAGGVESMSRAPFVMGKAESGYSRNMKLEDTTIGWRFINPLMKSQYGVDSMPETADNVADDYQVSRADQDAFALRSQQKAAAAQAAGFFAEEIVPVRIAHKKGETIVERDEHLRPETTLEALTKLKPVNGPDKTVTAGNASGVNDGAAALILASAEAVKKHGLTPRARVLGMASGGVAPRVMGIGPVPAVRKLTERLGVAVSDFDVIELNEAFASQGLAVLRELGVADDAPQVNPNGGAIALGHPLGMSGARLVLTALHQLEKSGGRKGLATMCVGVGQGLALAIERV.

Cysteine 90 serves as the catalytic Acyl-thioester intermediate. Active-site proton acceptor residues include histidine 356 and cysteine 386.

This sequence belongs to the thiolase-like superfamily. Thiolase family.

It carries out the reaction succinyl-CoA + acetyl-CoA = 3-oxoadipyl-CoA + CoA. It participates in aromatic compound metabolism; beta-ketoadipate pathway; acetyl-CoA and succinyl-CoA from 3-oxoadipate: step 2/2. In terms of biological role, catalyzes thiolytic cleavage of beta-ketoadipyl-CoA to succinyl-CoA and acetyl-CoA. This chain is Beta-ketoadipyl-CoA thiolase (pcaF), found in Pseudomonas putida (Arthrobacter siderocapsulatus).